The sequence spans 792 residues: Molybdenum cofactor sulfurase (792 aa).

Position 246 is an N6-(pyridoxal phosphate)lysine (K246). C414 is a catalytic residue. Positions 646 to 792 constitute an MOSC domain; sequence LRLLRQSSQR…LTCGDVVVVT (147 aa). S748 is modified (phosphoserine).

It belongs to the class-V pyridoxal-phosphate-dependent aminotransferase family. MOCOS subfamily. The cofactor is pyridoxal 5'-phosphate.

It catalyses the reaction Mo-molybdopterin + L-cysteine + AH2 = thio-Mo-molybdopterin + L-alanine + A + H2O. It participates in cofactor biosynthesis; molybdopterin biosynthesis. Functionally, sulfurates the molybdenum cofactor. Sulfation of molybdenum is essential for xanthine dehydrogenase (XDH) and aldehyde oxidase (ADO) enzymes in which molybdenum cofactor is liganded by 1 oxygen and 1 sulfur atom in active form. The sequence is that of Molybdenum cofactor sulfurase from Drosophila pseudoobscura pseudoobscura (Fruit fly).